The chain runs to 409 residues: Terpredoxin reductase (409 aa).

7–38 (TTVIVGAGHAGTAAAFFLREFGYHGRVLLLSA) lines the FAD pocket. An NAD(+)-binding site is contributed by 151 to 159 (GGGFIGLEI).

FAD is required as a cofactor.

Functionally, the oxidation of alpha-terpineol by cytochrome p450-TERP requires the participation of a flavoprotein, terpredoxin reductase, and an iron-sulfur protein, terpredoxin, to mediate the transfer of electrons from NADH to P450 for oxygen activation. In Pseudomonas sp, this protein is Terpredoxin reductase (terPA).